A 556-amino-acid polypeptide reads, in one-letter code: CDP-diacylglycerol--glycerol-3-phosphate 3-phosphatidyltransferase, mitochondrial (556 aa).

Residues 1–28 (MAVAAAAAAGPVFWRRLLGLLPGRPGLA) constitute a mitochondrion transit peptide. Position 49 is a phosphoserine (S49). ATP is bound at residue 124–131 (ASLYLGTG). PLD phosphodiesterase domains lie at 215–241 (TIGL…SDSY) and 460–493 (RGWT…GYRS). Residues H220, K222, and D227 contribute to the active site.

This sequence belongs to the CDP-alcohol phosphatidyltransferase class-II family.

The protein localises to the mitochondrion. It carries out the reaction a CDP-1,2-diacyl-sn-glycerol + sn-glycerol 3-phosphate = a 1,2-diacyl-sn-glycero-3-phospho-(1'-sn-glycero-3'-phosphate) + CMP + H(+). Its pathway is phospholipid metabolism; phosphatidylglycerol biosynthesis; phosphatidylglycerol from CDP-diacylglycerol: step 1/2. Activated by calcium and magnesium and inhibited by other bivalent cations. Functions in the biosynthesis of the anionic phospholipids phosphatidylglycerol and cardiolipin. This Homo sapiens (Human) protein is CDP-diacylglycerol--glycerol-3-phosphate 3-phosphatidyltransferase, mitochondrial (PGS1).